Consider the following 1316-residue polypeptide: DNA-directed RNA polymerase subunit beta' (1316 aa).

Positions 60, 62, 75, and 78 each coordinate Zn(2+). D535, D537, and D539 together coordinate Mg(2+). C891, C968, C975, and C978 together coordinate Zn(2+).

Belongs to the RNA polymerase beta' chain family. The RNAP catalytic core consists of 2 alpha, 1 beta, 1 beta' and 1 omega subunit. When a sigma factor is associated with the core the holoenzyme is formed, which can initiate transcription. Mg(2+) is required as a cofactor. The cofactor is Zn(2+).

It catalyses the reaction RNA(n) + a ribonucleoside 5'-triphosphate = RNA(n+1) + diphosphate. In terms of biological role, DNA-dependent RNA polymerase catalyzes the transcription of DNA into RNA using the four ribonucleoside triphosphates as substrates. The protein is DNA-directed RNA polymerase subunit beta' of Mycobacterium marinum (strain ATCC BAA-535 / M).